Consider the following 161-residue polypeptide: Nucleotide-binding protein Vapar_3769 (161 aa).

It belongs to the YajQ family.

Functionally, nucleotide-binding protein. The protein is Nucleotide-binding protein Vapar_3769 of Variovorax paradoxus (strain S110).